A 71-amino-acid polypeptide reads, in one-letter code: MNTIEHRLMELEAKVAFQDETIDILNDEIKVHQQLLAKMKRQTELLAEKIKESQSSSSMMSNEPEPPPPHY.

The segment at 49-71 (KIKESQSSSSMMSNEPEPPPPHY) is disordered.

The protein belongs to the SlyX family.

This chain is Protein SlyX homolog, found in Pseudoalteromonas translucida (strain TAC 125).